Here is a 132-residue protein sequence, read N- to C-terminus: uncharacterized protein (132 aa).

Transmembrane regions (helical) follow at residues 7 to 29 (LALL…PTLF), 44 to 62 (VFPV…SLFL), 69 to 88 (LFLS…EFIV), and 108 to 130 (GVSM…ILIF).

The protein localises to the cell membrane. This is an uncharacterized protein from Aquifex aeolicus (strain VF5).